The following is a 450-amino-acid chain: MGKRLFGTDGLRGQVNIYPMTADVALRLGLAAGTHFRNGNRRHRVVIGKDTRLSGYVFESALTAGLCAAGMDVYLVGPLPTPAIAFLTRNMRADLGVVISASHNPFMDNGIKFFDKDGFKLPDEMENKITDMVLDPDWQWDYPAPERVGRAAKIEDSPGRYIVYLKNSFPAHLTLDGMRVVLDCANGANYKVAPLALEELGAEVIKIGTEPNGLNINHQCGSLYPGVAAGKVLETRADVGLALDGDADRLIVVDEKGTVLDGDQIMALCADDMLRRGALRNNTLVATVMSNMALEVYMKERGCKLLRTPVGDRYVVEAMRREGANLGGEQSGHLIFMDHGTTGDGLMAALQILRIMRERDRPLSELAGQLQLFPQELINVHVERKIPFEQCQPVLDGVAKVEAELGDRGRVLLRYSGTEAVCRVMVEGEDPEQVKRLASLLAETVQKHLR.

S102 serves as the catalytic Phosphoserine intermediate. Mg(2+) contacts are provided by S102, D244, D246, and D248. S102 carries the post-translational modification Phosphoserine.

The protein belongs to the phosphohexose mutase family. It depends on Mg(2+) as a cofactor. In terms of processing, activated by phosphorylation.

It catalyses the reaction alpha-D-glucosamine 1-phosphate = D-glucosamine 6-phosphate. In terms of biological role, catalyzes the conversion of glucosamine-6-phosphate to glucosamine-1-phosphate. This Nitratidesulfovibrio vulgaris (strain DSM 19637 / Miyazaki F) (Desulfovibrio vulgaris) protein is Phosphoglucosamine mutase.